We begin with the raw amino-acid sequence, 152 residues long: D-erythrulose-4-phosphate isomerase (152 aa).

Cysteine 67 functions as the Proton acceptor in the catalytic mechanism.

The protein belongs to the LacAB/RpiB family.

It catalyses the reaction D-erythrulose 4-phosphate = D-erythrose 4-phosphate. It functions in the pathway carbohydrate metabolism. Functionally, involved in catabolism of D-apiose. Catalyzes the isomerization of D-erythrulose 4-phosphate to D-erythrose 4-phosphate. This Pectobacterium atrosepticum (strain SCRI 1043 / ATCC BAA-672) (Erwinia carotovora subsp. atroseptica) protein is D-erythrulose-4-phosphate isomerase.